We begin with the raw amino-acid sequence, 205 residues long: MEVNVINIESQNIGKIDLNPLIFSVNYRPDILKMVVEWQLSKRRIGAHKTKTIGDVSGTTAKPYRQKHTGRARQGSLRSPQFRGGAVIFGPVVRTHAYSLNKKVRNLGLKVALSLKNSCNKLLILDSIDVNFVKTAQVLRFIKNFEHQSFLIIGKDYNKGMMYSCKNLHNVTLLKQIGTNVFDILRHDCVILTVDTVKYLEDRLL.

The interval 56-76 (VSGTTAKPYRQKHTGRARQGS) is disordered.

It belongs to the universal ribosomal protein uL4 family. Part of the 50S ribosomal subunit.

Functionally, one of the primary rRNA binding proteins, this protein initially binds near the 5'-end of the 23S rRNA. It is important during the early stages of 50S assembly. It makes multiple contacts with different domains of the 23S rRNA in the assembled 50S subunit and ribosome. In terms of biological role, forms part of the polypeptide exit tunnel. The protein is Large ribosomal subunit protein uL4 of Ehrlichia ruminantium (strain Welgevonden).